The chain runs to 895 residues: Eukaryotic translation initiation factor 3 subunit C (895 aa).

Residues 1–108 form a disordered region; that stretch reads MSGFFRKVGD…DSDSEEEVKK (108 aa). Composition is skewed to acidic residues over residues 11-31 and 52-75; these read SDSE…ESGD and DDSD…DDDN. The PCI domain occupies 638 to 812; it reads FHMHINLELL…NVVSFHRLEL (175 aa). The segment covering 838–860 has biased composition (basic and acidic residues); the sequence is DAKLGEGKEQRSGAGGERGDREG. The interval 838 to 895 is disordered; it reads DAKLGEGKEQRSGAGGERGDREGGQPGGRRERRGGSAARGRGRGRGRAQQFQALGQKV. Low complexity predominate over residues 884-895; the sequence is RAQQFQALGQKV.

The protein belongs to the eIF-3 subunit C family. As to quaternary structure, component of the eukaryotic translation initiation factor 3 (eIF-3) complex.

It is found in the cytoplasm. Functionally, component of the eukaryotic translation initiation factor 3 (eIF-3) complex, which is involved in protein synthesis of a specialized repertoire of mRNAs and, together with other initiation factors, stimulates binding of mRNA and methionyl-tRNAi to the 40S ribosome. The eIF-3 complex specifically targets and initiates translation of a subset of mRNAs involved in cell proliferation. This Mycosarcoma maydis (Corn smut fungus) protein is Eukaryotic translation initiation factor 3 subunit C.